The chain runs to 61 residues: Metallothionein-1B (61 aa).

The segment at 1 to 29 (MDPNCSCTTGGSCACAGSCKCKECKCTSC) is beta. Residues cysteine 5, cysteine 7, cysteine 13, cysteine 15, cysteine 19, cysteine 21, cysteine 24, cysteine 26, cysteine 29, cysteine 33, cysteine 34, cysteine 36, cysteine 37, cysteine 41, cysteine 44, cysteine 48, cysteine 50, cysteine 57, cysteine 59, and cysteine 60 each contribute to the a divalent metal cation site. The interval 30-61 (KKCCCSCCPVGCAKCAQGCVCKGSSEKCRCCA) is alpha.

The protein belongs to the metallothionein superfamily. Type 1 family. In terms of assembly, monomer.

Functionally, metallothioneins have a high content of cysteine residues that bind various heavy metals; these proteins are transcriptionally regulated by both heavy metals and glucocorticoids. The chain is Metallothionein-1B (MT1B) from Homo sapiens (Human).